An 872-amino-acid polypeptide reads, in one-letter code: Alanine--tRNA ligase (872 aa).

His-567, His-571, Cys-669, and His-673 together coordinate Zn(2+).

Belongs to the class-II aminoacyl-tRNA synthetase family. Zn(2+) serves as cofactor.

The protein resides in the cytoplasm. The catalysed reaction is tRNA(Ala) + L-alanine + ATP = L-alanyl-tRNA(Ala) + AMP + diphosphate. Catalyzes the attachment of alanine to tRNA(Ala) in a two-step reaction: alanine is first activated by ATP to form Ala-AMP and then transferred to the acceptor end of tRNA(Ala). Also edits incorrectly charged Ser-tRNA(Ala) and Gly-tRNA(Ala) via its editing domain. The protein is Alanine--tRNA ligase of Streptococcus pneumoniae serotype 2 (strain D39 / NCTC 7466).